Consider the following 423-residue polypeptide: Aspartate aminotransferase, mitochondrial (423 aa).

The N-terminal 22 residues, 1-22 (MALLQSRLLLSAPRRAAATARA), are a transit peptide targeting the mitochondrion. Substrate is bound by residues G58, W155, and N208. K272 carries the N6-(pyridoxal phosphate)lysine modification. R400 is a binding site for substrate.

This sequence belongs to the class-I pyridoxal-phosphate-dependent aminotransferase family. Homodimer. It depends on pyridoxal 5'-phosphate as a cofactor. Detected in heart (at protein level).

It is found in the mitochondrion matrix. It carries out the reaction L-aspartate + 2-oxoglutarate = oxaloacetate + L-glutamate. It catalyses the reaction L-kynurenine + 2-oxoglutarate = kynurenate + L-glutamate + H2O. Its function is as follows. Catalyzes the irreversible transamination of the L-tryptophan metabolite L-kynurenine to form kynurenic acid (KA). As a member of the malate-aspartate shuttle, it has a key role in the intracellular NAD(H) redox balance. Is important for metabolite exchange between mitochondria and cytosol, and for amino acid metabolism. The sequence is that of Aspartate aminotransferase, mitochondrial (GOT2) from Gallus gallus (Chicken).